We begin with the raw amino-acid sequence, 384 residues long: Surfeit locus protein 1-like (384 aa).

3 helical membrane passes run 55 to 75, 302 to 322, and 338 to 358; these read ALLW…YKFL, IPLD…TCFI, and IGVE…TKIY.

The protein belongs to the SURF1 (TC 3.D.4.8) family.

The protein localises to the mitochondrion inner membrane. Its function is as follows. May be involved in the biogenesis of the COX complex. This Arabidopsis thaliana (Mouse-ear cress) protein is Surfeit locus protein 1-like.